Here is an 852-residue protein sequence, read N- to C-terminus: Disks large homolog 2 (852 aa).

S-palmitoyl cysteine attachment occurs at residues cysteine 5 and cysteine 7. Serine 28 carries the post-translational modification Phosphoserine. A Phosphotyrosine modification is found at tyrosine 58. Position 65 is a phosphoserine (serine 65). PDZ domains follow at residues 98 to 184 and 193 to 279; these read EITL…VRRR and EIKL…VGKP. Residues serine 307, serine 328, serine 360, serine 365, serine 406, and serine 414 each carry the phosphoserine modification. The PDZ 3 domain occupies 421–501; it reads KVVLHKGSTG…QTVTIIAQYQ (81 aa). Tyrosine 505 is subject to Phosphotyrosine. 3 positions are modified to phosphoserine: serine 528, serine 530, and serine 553. The SH3 domain occupies 536–606; that stretch reads KRSLYVRAMF…PSKRRVERKE (71 aa). Residues 662–837 form the Guanylate kinase-like domain; it reads TRPVIILGPM…IYNQCKLVIE (176 aa). Phosphotyrosine occurs at positions 732 and 737.

Belongs to the MAGUK family. In terms of assembly, interacts through its PDZ domains with NETO1. Interacts with NOS1/nNOS through second PDZ domain. Interacts with KCNJ2/Kir2.1 (via C-terminus) through one of its PDZ domains. Interacts with KCNJ4. Interacts with FRMPD4 (via C-terminus). Interacts with LRFN1. Interacts with LRFN2 and LRFN4. Interacts with FASLG. Interacts with ADAM22. Interacts with DGKI (via PDZ-binding motif). In terms of processing, palmitoylation of isoform 1 and isoform 2 is not required for targeting to postsynaptic density. In terms of tissue distribution, detected in juxtaparanodal zones in the central nervous system and at nerve terminal plexuses of basket cells in the cerebellum (at protein level). Brain. High levels in cerebellar Purkinje cells. Expressed in pyramidal cells of the Ammons's horn and granular cells of the dentate gyrus in the hippocampus as well as cerebral cortex and striatum. High levels in dorsal horn of spinal cord.

It localises to the cell membrane. The protein resides in the postsynaptic density. The protein localises to the synapse. Its subcellular location is the cell projection. It is found in the axon. It localises to the membrane. The protein resides in the perikaryon. Functionally, required for perception of chronic pain through NMDA receptor signaling. Regulates surface expression of NMDA receptors in dorsal horn neurons of the spinal cord. Interacts with the cytoplasmic tail of NMDA receptor subunits as well as inward rectifying potassium channels. Involved in regulation of synaptic stability at cholinergic synapses. Part of the postsynaptic protein scaffold of excitatory synapses. The sequence is that of Disks large homolog 2 (Dlg2) from Rattus norvegicus (Rat).